A 158-amino-acid polypeptide reads, in one-letter code: Serine-protein kinase RsbW (158 aa).

It belongs to the anti-sigma-factor family.

It carries out the reaction L-seryl-[protein] + ATP = O-phospho-L-seryl-[protein] + ADP + H(+). The catalysed reaction is L-threonyl-[protein] + ATP = O-phospho-L-threonyl-[protein] + ADP + H(+). Functionally, negative regulator of sigma-B activity. Phosphorylates and inactivates its specific antagonist protein, RsbV. Upon phosphorylation of RsbV, RsbW is released and binds to sigma-B, thereby blocking its ability to form an RNA polymerase holoenzyme (E-sigma-B). The protein is Serine-protein kinase RsbW of Oceanobacillus iheyensis (strain DSM 14371 / CIP 107618 / JCM 11309 / KCTC 3954 / HTE831).